The primary structure comprises 93 residues: MHNTGKRYSETAKKVAAGRARKRRQAYEKDQLEKQQLEAQEAQRWEEGARTPNQKKLIMEQKKTEKLRAKKERDQLLAAEEEALGKGGRGKRY.

Residues 1-73 form a disordered region; that stretch reads MHNTGKRYSE…TEKLRAKKER (73 aa). Residues 20–83 are a coiled coil; it reads ARKRRQAYEK…DQLLAAEEEA (64 aa). 2 stretches are compositionally biased toward basic and acidic residues: residues 25-49 and 57-73; these read QAYE…EEGA and LIME…KKER.

Its subcellular location is the nucleus. The protein resides in the cytoplasm. Likely to play a role in iron homeostasis. This is Protein LSO1 from Saccharomyces cerevisiae (strain ATCC 204508 / S288c) (Baker's yeast).